A 201-amino-acid chain; its full sequence is Molybdenum cofactor guanylyltransferase (201 aa).

Residues 15–17, lysine 28, aspartate 74, and aspartate 104 contribute to the GTP site; that span reads LAG. A Mg(2+)-binding site is contributed by aspartate 104.

Belongs to the MobA family. As to quaternary structure, monomer. It depends on Mg(2+) as a cofactor.

It is found in the cytoplasm. It carries out the reaction Mo-molybdopterin + GTP + H(+) = Mo-molybdopterin guanine dinucleotide + diphosphate. Its function is as follows. Transfers a GMP moiety from GTP to Mo-molybdopterin (Mo-MPT) cofactor (Moco or molybdenum cofactor) to form Mo-molybdopterin guanine dinucleotide (Mo-MGD) cofactor. This chain is Molybdenum cofactor guanylyltransferase, found in Pseudomonas syringae pv. syringae (strain B728a).